Reading from the N-terminus, the 256-residue chain is Fat body protein 2 (256 aa).

10 to 34 (VYVGSFSGIGWQMMMQLMQKDIKMM) is a binding site for NAD(+). Ser138 is a binding site for substrate. Tyr151 acts as the Proton acceptor in catalysis.

Belongs to the short-chain dehydrogenases/reductases (SDR) family.

This is Fat body protein 2 (Fbp2) from Drosophila melanogaster (Fruit fly).